Reading from the N-terminus, the 313-residue chain is Ribosomal RNA small subunit methyltransferase H (313 aa).

Residues 35-37, Asp-55, Phe-79, Asp-100, and Gln-107 each bind S-adenosyl-L-methionine; that span reads GGH.

This sequence belongs to the methyltransferase superfamily. RsmH family.

It is found in the cytoplasm. The enzyme catalyses cytidine(1402) in 16S rRNA + S-adenosyl-L-methionine = N(4)-methylcytidine(1402) in 16S rRNA + S-adenosyl-L-homocysteine + H(+). Functionally, specifically methylates the N4 position of cytidine in position 1402 (C1402) of 16S rRNA. This chain is Ribosomal RNA small subunit methyltransferase H, found in Burkholderia pseudomallei (strain 1106a).